A 133-amino-acid chain; its full sequence is Small ribosomal subunit protein uS12c (133 aa).

The protein belongs to the universal ribosomal protein uS12 family. Part of the 30S ribosomal subunit.

It localises to the plastid. The protein resides in the chloroplast. With S4 and S5 plays an important role in translational accuracy. Located at the interface of the 30S and 50S subunits. The sequence is that of Small ribosomal subunit protein uS12c (rps12) from Chlamydomonas reinhardtii (Chlamydomonas smithii).